The chain runs to 360 residues: 3-dehydroquinate synthase (360 aa).

NAD(+) is bound by residues 69 to 74 (DGEKYK), 103 to 107 (GVVGD), 127 to 128 (TT), lysine 140, lysine 149, and 167 to 170 (TLDT). 3 residues coordinate Zn(2+): glutamate 182, histidine 246, and histidine 263.

Belongs to the sugar phosphate cyclases superfamily. Dehydroquinate synthase family. It depends on Co(2+) as a cofactor. Zn(2+) is required as a cofactor. Requires NAD(+) as cofactor.

It localises to the cytoplasm. The catalysed reaction is 7-phospho-2-dehydro-3-deoxy-D-arabino-heptonate = 3-dehydroquinate + phosphate. It participates in metabolic intermediate biosynthesis; chorismate biosynthesis; chorismate from D-erythrose 4-phosphate and phosphoenolpyruvate: step 2/7. Its function is as follows. Catalyzes the conversion of 3-deoxy-D-arabino-heptulosonate 7-phosphate (DAHP) to dehydroquinate (DHQ). The protein is 3-dehydroquinate synthase of Vesicomyosocius okutanii subsp. Calyptogena okutanii (strain HA).